The following is a 974-amino-acid chain: Membrane-associated phosphatidylinositol transfer protein 3 (974 aa).

Phosphoserine is present on residues serine 30, serine 31, serine 109, serine 295, serine 298, serine 321, serine 343, and serine 495. Positions 284-304 (GDSPASSSRKGSISSTQDTPV) are disordered. Residues 292-302 (RKGSISSTQDT) show a composition bias toward polar residues. Disordered stretches follow at residues 323-346 (IDIS…SDSS) and 491-536 (SSRD…SMAP). The region spanning 390-594 (FDFDVSDFFL…VAFILRQVMR (205 aa)) is the DDHD domain. Residues 520–533 (EGSSHSESSESSDS) are compositionally biased toward low complexity. Phosphoserine occurs at positions 612, 907, 928, and 946. The interval 927–974 (MSVQQPDPPAANPKPERAQSQPESDKDHERPLPALSWARGPPKFESVP) is disordered.

It belongs to the PtdIns transfer protein family. PI transfer class IIA subfamily. Interacts with PTK2B via its C-terminus. In terms of tissue distribution, detected in brain and spleen, and at low levels in ovary.

It is found in the endomembrane system. Its function is as follows. Catalyzes the transfer of phosphatidylinositol and phosphatidylcholine between membranes (in vitro). Binds calcium ions. This is Membrane-associated phosphatidylinositol transfer protein 3 (PITPNM3) from Homo sapiens (Human).